We begin with the raw amino-acid sequence, 508 residues long: GMP synthase [glutamine-hydrolyzing] (508 aa).

Residues 1 to 189 (MILVLDFGSQ…ALLVCGCEKT (189 aa)) enclose the Glutamine amidotransferase type-1 domain. The active-site Nucleophile is the Cys78. Active-site residues include His163 and Glu165. Residues 190–383 (WGMQHFAQKE…LGISQDFLMR (194 aa)) form the GMPS ATP-PPase domain. ATP is bound at residue 217 to 223 (SGGVDST).

Homodimer.

The enzyme catalyses XMP + L-glutamine + ATP + H2O = GMP + L-glutamate + AMP + diphosphate + 2 H(+). Its pathway is purine metabolism; GMP biosynthesis; GMP from XMP (L-Gln route): step 1/1. Its function is as follows. Catalyzes the synthesis of GMP from XMP. The protein is GMP synthase [glutamine-hydrolyzing] of Helicobacter pylori (strain Shi470).